The chain runs to 78 residues: Putative membrane protein insertion efficiency factor (78 aa).

It belongs to the UPF0161 family.

It is found in the cell membrane. Could be involved in insertion of integral membrane proteins into the membrane. The polypeptide is Putative membrane protein insertion efficiency factor (Limosilactobacillus reuteri (strain DSM 20016) (Lactobacillus reuteri)).